The chain runs to 325 residues: MRVENNNVSGQNLDPEQIDLIDLLVQLWRGKMTIIISVIVAIVLAIGYLVVAKEKWTSTAIVTQPDVGQIAGYNNAINVIYGSAAPKVSEIQSILIGRFSTTFSALAETLDNQEEPEKLTIEPTVKNQSLPLAVSYVGQSPEAAQKQLAQYIQQVDDQVNDELEKDLKDNIALRMKNLQDSLKTQEVVAQEQKELRIRQIQEALQYANQAQVTKPQIQQTQDVTQDTMFLLGSDALESMVKHEASRPLVFSSTYYQTRQNLLDIESLKVDDLDIHAYRYVMKPTLPIRRDSPKKAITLILAVLLGGMVGAGIVLGRNALRNYNAK.

The Cytoplasmic portion of the chain corresponds to 1-31 (MRVENNNVSGQNLDPEQIDLIDLLVQLWRGK). The chain crosses the membrane as a helical span at residues 32-52 (MTIIISVIVAIVLAIGYLVVA). Topologically, residues 53-294 (KEKWTSTAIV…LPIRRDSPKK (242 aa)) are periplasmic. The chain crosses the membrane as a helical span at residues 295-315 (AITLILAVLLGGMVGAGIVLG). Topologically, residues 316-325 (RNALRNYNAK) are cytoplasmic.

Belongs to the WzzB/Cld/Rol family.

It localises to the cell inner membrane. It functions in the pathway bacterial outer membrane biogenesis; lipopolysaccharide biosynthesis. In terms of biological role, confers a modal distribution of chain length on the O-antigen component of lipopolysaccharide (LPS). Gives rise to a reduced number of short chain molecules and increases in numbers of longer molecules, with a modal value of 13 (in strain O111/M92) and of 17 (in strain K12). This Escherichia coli protein is Chain length determinant protein (wzzB).